Reading from the N-terminus, the 432-residue chain is uncharacterized protein (432 aa).

The next 12 membrane-spanning stretches (helical) occupy residues 35-55 (VARVGAATALAVACVYTVIYL), 60-80 (LPPACFSIFAVFWGALGIATG), 112-132 (VAGMIGTVAAVVIAGSSPLWS), 144-164 (VGLLSVGVAGFCAQATLLGAL), 185-205 (LAVAAAAVVIGWGLAGYLWAA), 209-229 (AVAWLLMLMASPTARSAASLL), 242-262 (AHSITAAGASAILVMGFPVLL), 274-294 (GAVILAVTLTRAPLLVPLSAM), 313-333 (LIAPALVVGGIGAVGMLAAGL), 359-379 (AAAVAIAMLTLTGAAAVAAAL), 384-404 (LLGWVSATVASTLLLLLPMPL), and 408-428 (TVIALLFGPTVGIAIHVAALA).

It to M.tuberculosis Rv3630 and M.bovis Mb3654.

It localises to the cell membrane. This is an uncharacterized protein from Mycobacterium tuberculosis (strain CDC 1551 / Oshkosh).